We begin with the raw amino-acid sequence, 165 residues long: Free methionine-R-sulfoxide reductase (165 aa).

The GAF domain maps to 49-149 (LLEDDTLVLG…LRQLVAQLEK (101 aa)).

This sequence belongs to the free Met sulfoxide reductase family.

The catalysed reaction is [thioredoxin]-disulfide + L-methionine + H2O = L-methionine (R)-S-oxide + [thioredoxin]-dithiol. In terms of biological role, catalyzes the reversible oxidation-reduction of the R-enantiomer of free methionine sulfoxide to methionine. Specific for free L-methionine-(R)-S-oxide. This Escherichia coli (strain K12) protein is Free methionine-R-sulfoxide reductase (msrC).